Reading from the N-terminus, the 153-residue chain is Aspartate carbamoyltransferase regulatory chain (153 aa).

Residues Cys-109, Cys-114, Cys-138, and Cys-141 each contribute to the Zn(2+) site.

This sequence belongs to the PyrI family. In terms of assembly, contains catalytic and regulatory chains. Zn(2+) serves as cofactor.

Its function is as follows. Involved in allosteric regulation of aspartate carbamoyltransferase. This chain is Aspartate carbamoyltransferase regulatory chain, found in Shigella flexneri serotype 5b (strain 8401).